Reading from the N-terminus, the 521-residue chain is MSVRPFESPPPYRPDEFKPNHYAPSNDMYGGEMHVRPMLSQPAYSFYPEDEILHFYKWTSPPGVIRILSMLIIVMCIAIFACVASTLAWDRGYGTGLFGGSLNYPYSGFGYGGGYGGGYGGYGYGYGGYTDPRAAKGFLLAMAAFCFIASLVIFVTSVIRSGMSRTRRYYLIVIIVSAILGIMVFIATIVYIMGVNPTAQASGSMYGSQIYMICNQFYTPGGTGLYVDQYLYHYCVVDPQEAIAIVLGFMIIVAFALIIFFAVKTRRKMDRYDKSNILWDKEHIYDEQPPNVEEWVKNVSAGTQDMPPPPSDYAERVDSPMAYSSNGKVNGKRSYPESFYKSTPLVPEVAQEIPLTLSVDDFRQPRYSSNGNLETPSKRAPTKGKAGKGKRTDPDHYETDYTTGGESCEELEEDWVREYPPITSDQQRQLYKRNFDAGLQEYKSLQAELDDVNKELSRLDKELDDYREESEEYMAAADEYNRLKQVKGSADYKSKRNYCKQLKSKLSHIKRMVGDYDRRKP.

The segment at 1 to 20 (MSVRPFESPPPYRPDEFKPN) is disordered. The Cytoplasmic segment spans residues 1–66 (MSVRPFESPP…KWTSPPGVIR (66 aa)). Residues 60 to 267 (SPPGVIRILS…IIFFAVKTRR (208 aa)) enclose the MARVEL domain. A helical transmembrane segment spans residues 67–89 (ILSMLIIVMCIAIFACVASTLAW). The Extracellular portion of the chain corresponds to 90–133 (DRGYGTGLFGGSLNYPYSGFGYGGGYGGGYGGYGYGYGGYTDPR). A helical transmembrane segment spans residues 134-158 (AAKGFLLAMAAFCFIASLVIFVTSV). At 159–168 (IRSGMSRTRR) the chain is on the cytoplasmic side. A helical membrane pass occupies residues 169 to 193 (YYLIVIIVSAILGIMVFIATIVYIM). The Extracellular segment spans residues 194 to 241 (GVNPTAQASGSMYGSQIYMICNQFYTPGGTGLYVDQYLYHYCVVDPQE). Cysteine 214 and cysteine 235 are oxidised to a cystine. Residues 242–263 (AIAIVLGFMIIVAFALIIFFAV) form a helical membrane-spanning segment. The Cytoplasmic segment spans residues 264 to 521 (KTRRKMDRYD…MVGDYDRRKP (258 aa)). Position 300 is a phosphoserine (serine 300). The disordered stretch occupies residues 300–329 (SAGTQDMPPPPSDYAERVDSPMAYSSNGKV). Threonine 303 is modified (phosphothreonine). 2 positions are modified to phosphoserine: serine 311 and serine 319. Serine 338 carries the post-translational modification Phosphoserine; by PKC; in vitro. A Phosphoserine modification is found at serine 358. The interval 361–405 (DFRQPRYSSNGNLETPSKRAPTKGKAGKGKRTDPDHYETDYTTGG) is disordered. Residues 366 to 375 (RYSSNGNLET) are compositionally biased toward polar residues. Tyrosine 367 carries the post-translational modification Phosphotyrosine. Phosphoserine occurs at positions 368 and 369. Residues 380–389 (APTKGKAGKG) show a composition bias toward basic residues. Basic and acidic residues predominate over residues 390-399 (KRTDPDHYET). Tyrosine 397 and tyrosine 401 each carry phosphotyrosine. Phosphothreonine; by PKC/PRKCH is present on threonine 402. At threonine 403 the chain carries Phosphothreonine. A Phosphoserine modification is found at serine 407. In terms of domain architecture, OCEL spans 413 to 521 (EDWVREYPPI…MVGDYDRRKP (109 aa)). The stretch at 424 to 488 (SDQQRQLYKR…EYNRLKQVKG (65 aa)) forms a coiled coil. At serine 489 the chain carries Phosphoserine.

Belongs to the ELL/occludin family. Interacts with TJP1/ZO1. Interacts with VAPA. Interacts with CLDN1, CLDN6, CLDN9, CLDN11, CLDN12 and CLDN17. Interacts with PLSCR1. Interacts with LSR, ILDR1 and ILDR2. Interacts with TJP2/ZO2. In terms of processing, dephosphorylated by PTPRJ. May be phosphorylated by PKC during translocation to cell-cell contacts. As to expression, localized at tight junctions of both epithelial and endothelial cells. Highly expressed in the testis, kidney, lung, liver and brain. Not detected in skeletal muscle, spleen and heart.

The protein localises to the cell membrane. It is found in the cell junction. It localises to the tight junction. Its function is as follows. May play a role in the formation and regulation of the tight junction (TJ) paracellular permeability barrier. This is Occludin (Ocln) from Mus musculus (Mouse).